The chain runs to 591 residues: MPTVGIKKVILDKHFKRVYSEKEFDELCFEYGLELDEITSEKAAVEKEQGTRAASDLNDQEVYKIDIPANRYDLLSVEGLARAIRIFKQEIPSPAYKYADVPKTGLQKIIVKKETAQVRPFVVGAVLRDISFDADSYASFIDLQDKLHQNICRKRTLVAIGTHDLDTIQGPFEYRAEAPKDIKFKPLNQTKEYTAEELMTLYSTDSHLKAYLPIIQNHPVYPVIYDKNGVVCSMPPIINGEHSKITLNTKNVFIEATATDKQKAFVVLDTIVTLFSQYCAKPFTIEQVEVVYEETGVKELYPLLSYREMTVTTPEINTKIGINLKDEEMATLLNKMSLKAEVAAKETLKIVVPPTRHDILHACDIAEDVGVAFGYNNLITKLPESNTVAVAFPINKLCDNLRIEIAAAGWTEALNFALCSRDDISSKLRQPDALSHAVHIGNPKTLEFQVARTSLLPGLLKTLSSNRDMPLPLKLFELQDVIVKDSNTDVGARNERRLAAVYYNRAAGFEIIQGFLDRIMRMLNVNPARDGTGYYIEADENSTYFPGRCAKIIGPKGVVLGHIGALHPEVITSFGLTLPCGAVEINVEPFL.

One can recognise a B5 domain in the interval 304–380 (LSYREMTVTT…VAFGYNNLIT (77 aa)). Positions 358, 364, 367, and 368 each coordinate Mg(2+).

This sequence belongs to the phenylalanyl-tRNA synthetase beta subunit family. Type 2 subfamily. As to quaternary structure, tetramer of two alpha and two beta subunits. Mg(2+) is required as a cofactor.

The protein resides in the cytoplasm. The catalysed reaction is tRNA(Phe) + L-phenylalanine + ATP = L-phenylalanyl-tRNA(Phe) + AMP + diphosphate + H(+). In Caenorhabditis elegans, this protein is Phenylalanine--tRNA ligase beta subunit.